A 335-amino-acid polypeptide reads, in one-letter code: Nucleoid-associated protein YejK (335 aa).

This sequence belongs to the YejK family.

The protein resides in the cytoplasm. It localises to the nucleoid. In Salmonella enteritidis PT4 (strain P125109), this protein is Nucleoid-associated protein YejK.